The primary structure comprises 387 residues: Probable G-protein coupled receptor 173 (387 aa).

Residues M1–L40 are Extracellular-facing. N-linked (GlcNAc...) asparagine glycosylation is present at N5. A helical transmembrane segment spans residues V41 to V61. Topologically, residues L62–A87 are cytoplasmic. A helical transmembrane segment spans residues V88 to L108. Residues S109–K111 lie on the Extracellular side of the membrane. C110 and C188 are disulfide-bonded. The helical transmembrane segment at V112–S132 threads the bilayer. Over V133–T153 the chain is Cytoplasmic. The helical transmembrane segment at C154–F174 threads the bilayer. At D175–G202 the chain is on the extracellular side. N198 is a glycosylation site (N-linked (GlcNAc...) asparagine). The chain crosses the membrane as a helical span at residues F203–L223. The Cytoplasmic portion of the chain corresponds to F224 to M301. The chain crosses the membrane as a helical span at residues F302–W322. Topologically, residues R323–Y335 are extracellular. A helical membrane pass occupies residues L336–F356. Residues L357 to M387 lie on the Cytoplasmic side of the membrane.

The protein belongs to the G-protein coupled receptor 1 family.

It localises to the cell membrane. Is a receptor for the SMIM20 derived peptides Phoenixin-14 and Phoenixin-20. It mediates the Phoenixin-14 and Phoenixin-20 augmentation of gonadotropin-releasing hormone (GNRH) signaling in the hypothalamus and pituitary gland. In the ovary, it mediates the effects of Phoenixin-14 and Phoenixin-20 induced granulosa cell proliferation during follicular growth. This Danio rerio (Zebrafish) protein is Probable G-protein coupled receptor 173 (gpr173).